The chain runs to 338 residues: Lipoate-protein ligase A (338 aa).

A BPL/LPL catalytic domain is found at 29 to 216 (PATQRVLFLW…AFFVHYGERV (188 aa)). ATP-binding positions include arginine 71, 76 to 79 (GAVF), and lysine 134. Lysine 134 provides a ligand contact to (R)-lipoate.

The protein belongs to the LplA family. In terms of assembly, monomer.

It is found in the cytoplasm. The catalysed reaction is L-lysyl-[lipoyl-carrier protein] + (R)-lipoate + ATP = N(6)-[(R)-lipoyl]-L-lysyl-[lipoyl-carrier protein] + AMP + diphosphate + H(+). It functions in the pathway protein modification; protein lipoylation via exogenous pathway; protein N(6)-(lipoyl)lysine from lipoate: step 1/2. The protein operates within protein modification; protein lipoylation via exogenous pathway; protein N(6)-(lipoyl)lysine from lipoate: step 2/2. Functionally, catalyzes both the ATP-dependent activation of exogenously supplied lipoate to lipoyl-AMP and the transfer of the activated lipoyl onto the lipoyl domains of lipoate-dependent enzymes. The sequence is that of Lipoate-protein ligase A from Salmonella newport (strain SL254).